We begin with the raw amino-acid sequence, 311 residues long: tRNA dimethylallyltransferase (311 aa).

9–16 provides a ligand contact to ATP; sequence GPTAVGKT. 11 to 16 provides a ligand contact to substrate; it reads TAVGKT. Residues 34–37 are interaction with substrate tRNA; the sequence is DSMQ.

This sequence belongs to the IPP transferase family. As to quaternary structure, monomer. Requires Mg(2+) as cofactor.

It carries out the reaction adenosine(37) in tRNA + dimethylallyl diphosphate = N(6)-dimethylallyladenosine(37) in tRNA + diphosphate. In terms of biological role, catalyzes the transfer of a dimethylallyl group onto the adenine at position 37 in tRNAs that read codons beginning with uridine, leading to the formation of N6-(dimethylallyl)adenosine (i(6)A). This chain is tRNA dimethylallyltransferase, found in Clostridium botulinum (strain Langeland / NCTC 10281 / Type F).